Reading from the N-terminus, the 181-residue chain is Oligoribonuclease (181 aa).

One can recognise an Exonuclease domain in the interval 8–171 (LIWIDLEMTG…DDIRESIAEL (164 aa)). Residue Y129 is part of the active site.

Belongs to the oligoribonuclease family.

It is found in the cytoplasm. 3'-to-5' exoribonuclease specific for small oligoribonucleotides. The protein is Oligoribonuclease of Vibrio vulnificus (strain CMCP6).